The chain runs to 398 residues: Mitochondrial protein import protein mas5 (398 aa).

Positions 7 to 88 (GYYKVLELSP…KKKKEYDSGM (82 aa)) constitute a J domain. Residues 139 to 219 (GKVSKFNVRT…CNGAEYIQDK (81 aa)) form a CR-type zinc finger. 144 to 146 (FNV) is a binding site for substrate. Positions 152, 155, 166, 169, 192, 195, 207, and 210 each coordinate Zn(2+). 4 CXXCXGXG motif repeats span residues 152-159 (CTTCDGKG), 166-173 (CKKCNGNG), 192-199 (CDGCDGSG), and 207-214 (CSTCNGAE). Substrate contacts are provided by residues 221-222 (MF) and 253-255 (VIF). Residues 367 to 386 (FGSMPEPERDHEDASEEGAQ) form a disordered region.

Belongs to the DnaJ family. As to quaternary structure, homodimer. Requires Zn(2+) as cofactor.

It is found in the cytoplasm. In terms of biological role, probably involved in mitosomal protein import. This is Mitochondrial protein import protein mas5 (MAS5) from Encephalitozoon cuniculi (strain GB-M1) (Microsporidian parasite).